Consider the following 234-residue polypeptide: 7-carboxy-7-deazaguanine synthase (234 aa).

Substrate contacts are provided by residues 36–38 and Arg-51; that span reads IQG. The Radical SAM core domain maps to 42–234; it reads FVGYPSIFIR…LQTHKFLGIE (193 aa). Residues Cys-55, Cys-59, and Cys-62 each contribute to the [4Fe-4S] cluster site. Thr-64 contacts Mg(2+). Residue Thr-100 participates in substrate binding. S-adenosyl-L-methionine-binding positions include Gly-102, 144 to 146, and 195 to 198; these read SPK and QSMD.

It belongs to the radical SAM superfamily. 7-carboxy-7-deazaguanine synthase family. As to quaternary structure, homodimer. [4Fe-4S] cluster serves as cofactor. The cofactor is S-adenosyl-L-methionine. It depends on Mg(2+) as a cofactor.

It carries out the reaction 6-carboxy-5,6,7,8-tetrahydropterin + H(+) = 7-carboxy-7-deazaguanine + NH4(+). The protein operates within purine metabolism; 7-cyano-7-deazaguanine biosynthesis. In terms of biological role, catalyzes the complex heterocyclic radical-mediated conversion of 6-carboxy-5,6,7,8-tetrahydropterin (CPH4) to 7-carboxy-7-deazaguanine (CDG), a step common to the biosynthetic pathways of all 7-deazapurine-containing compounds. This is 7-carboxy-7-deazaguanine synthase from Rickettsia prowazekii (strain Madrid E).